Consider the following 115-residue polypeptide: Large ribosomal subunit protein uL22 (115 aa).

Belongs to the universal ribosomal protein uL22 family. In terms of assembly, part of the 50S ribosomal subunit.

In terms of biological role, this protein binds specifically to 23S rRNA; its binding is stimulated by other ribosomal proteins, e.g. L4, L17, and L20. It is important during the early stages of 50S assembly. It makes multiple contacts with different domains of the 23S rRNA in the assembled 50S subunit and ribosome. Functionally, the globular domain of the protein is located near the polypeptide exit tunnel on the outside of the subunit, while an extended beta-hairpin is found that lines the wall of the exit tunnel in the center of the 70S ribosome. This Ligilactobacillus salivarius (strain UCC118) (Lactobacillus salivarius) protein is Large ribosomal subunit protein uL22.